Consider the following 142-residue polypeptide: MADKFDANDETRTVYAVVYDNDQPVSTGQFLAETKIEARLTRIVTLADYCGCGYGAKVTEALETYTRREGFYQLTIHSELTAQTFYENLGYQTYGPKCLEDGEYCQSLAKTILKWEKNMDIAMLIAIVGGLLGCYLYLTKNN.

Residues 1–120 (MADKFDANDE…TILKWEKNMD (120 aa)) form the N-acetyltransferase domain.

This sequence belongs to the acetyltransferase family.

This is an uncharacterized protein from Streptococcus pyogenes serotype M3 (strain ATCC BAA-595 / MGAS315).